The following is a 275-amino-acid chain: NH(3)-dependent NAD(+) synthetase (275 aa).

46–53 serves as a coordination point for ATP; the sequence is GISGGQDS. Aspartate 52 is a Mg(2+) binding site. Arginine 140 is a deamido-NAD(+) binding site. Threonine 160 contacts ATP. Glutamate 165 is a Mg(2+) binding site. Residues lysine 173 and aspartate 180 each contribute to the deamido-NAD(+) site. The ATP site is built by lysine 189 and threonine 211. 260–261 lines the deamido-NAD(+) pocket; the sequence is HK.

It belongs to the NAD synthetase family. Homodimer.

The enzyme catalyses deamido-NAD(+) + NH4(+) + ATP = AMP + diphosphate + NAD(+) + H(+). It functions in the pathway cofactor biosynthesis; NAD(+) biosynthesis; NAD(+) from deamido-NAD(+) (ammonia route): step 1/1. Catalyzes the ATP-dependent amidation of deamido-NAD to form NAD. Uses ammonia as a nitrogen source. The chain is NH(3)-dependent NAD(+) synthetase from Salmonella enteritidis PT4 (strain P125109).